The chain runs to 221 residues: PKHD-type hydroxylase PMN2A_0775 (221 aa).

Residues 80–174 enclose the Fe2OG dioxygenase domain; it reads LIHGVMFTQS…RHVCVGWIQS (95 aa). Fe cation contacts are provided by His-98, Asp-100, and His-155. A 2-oxoglutarate-binding site is contributed by Arg-165.

Fe(2+) is required as a cofactor. It depends on L-ascorbate as a cofactor.

The protein is PKHD-type hydroxylase PMN2A_0775 of Prochlorococcus marinus (strain NATL2A).